The chain runs to 91 residues: UPF0335 protein BRADO1188 (91 aa).

This sequence belongs to the UPF0335 family.

The sequence is that of UPF0335 protein BRADO1188 from Bradyrhizobium sp. (strain ORS 278).